A 261-amino-acid chain; its full sequence is Sulfur carrier protein FdhD (261 aa).

Cys105 acts as the Cysteine persulfide intermediate in catalysis. Mo-bis(molybdopterin guanine dinucleotide) is bound at residue 245–250 (FIRGDR).

It belongs to the FdhD family.

It localises to the cytoplasm. In terms of biological role, required for formate dehydrogenase (FDH) activity. Acts as a sulfur carrier protein that transfers sulfur from IscS to the molybdenum cofactor prior to its insertion into FDH. In Listeria innocua serovar 6a (strain ATCC BAA-680 / CLIP 11262), this protein is Sulfur carrier protein FdhD.